The sequence spans 204 residues: Glycerol-3-phosphate acyltransferase (204 aa).

Helical transmembrane passes span Ile-8 to Phe-28, Val-53 to Ala-73, Phe-81 to Gly-101, Phe-116 to Ile-136, and Val-155 to Leu-175.

This sequence belongs to the PlsY family. As to quaternary structure, probably interacts with PlsX.

The protein resides in the cell inner membrane. It carries out the reaction an acyl phosphate + sn-glycerol 3-phosphate = a 1-acyl-sn-glycero-3-phosphate + phosphate. It functions in the pathway lipid metabolism; phospholipid metabolism. Functionally, catalyzes the transfer of an acyl group from acyl-phosphate (acyl-PO(4)) to glycerol-3-phosphate (G3P) to form lysophosphatidic acid (LPA). This enzyme utilizes acyl-phosphate as fatty acyl donor, but not acyl-CoA or acyl-ACP. The chain is Glycerol-3-phosphate acyltransferase from Francisella tularensis subsp. novicida (strain U112).